A 319-amino-acid polypeptide reads, in one-letter code: Glucokinase (319 aa).

8 to 13 is a binding site for ATP; the sequence is GDIGGT.

Belongs to the bacterial glucokinase family.

It is found in the cytoplasm. It carries out the reaction D-glucose + ATP = D-glucose 6-phosphate + ADP + H(+). This Chromohalobacter salexigens (strain ATCC BAA-138 / DSM 3043 / CIP 106854 / NCIMB 13768 / 1H11) protein is Glucokinase.